The chain runs to 476 residues: Thyroid receptor-interacting protein 6 (476 aa).

Over residues 1 to 12 (MSGPTWLPPKQP) the composition is skewed to pro residues. 2 disordered regions span residues 1-93 (MSGP…PGSL) and 108-253 (NGGR…QPPE). Asymmetric dimethylarginine; alternate is present on arginine 25. Omega-N-methylarginine; alternate is present on arginine 25. Tyrosine 55 is subject to Phosphotyrosine; by SRC. The residue at position 92 (serine 92) is a Phosphoserine. Arginine 111 is subject to Omega-N-methylarginine. Residue serine 142 is modified to Phosphoserine. Low complexity predominate over residues 152-167 (PTPASYTTASTPAGPA). Omega-N-methylarginine is present on residues arginine 179 and arginine 186. Serine 189 is subject to Phosphoserine. Arginine 205, arginine 236, and arginine 238 each carry omega-N-methylarginine. Serine 249 is modified (phosphoserine). LIM zinc-binding domains are found at residues 279 to 316 (CGGCGEDVVGDGAGVVALDRVFHVGCFVCSTCRAQLRG), 339 to 398 (CATC…FAPR), and 399 to 467 (CSVC…RIQE). An interaction with MAGI1 and PTPN13 region spans residues 469-476 (SATVTTDC).

Belongs to the zyxin/ajuba family. Specifically interacts with the ligand binding domain of the thyroid receptor (TR) in the presence of thyroid hormone. Interacts (via the third LIM domain and C-terminus) with PTPN13 (via the second PDZ domain). Interacts (via the second LIM domain or via the third LIM domain plus C-terminus) with PDLIM4 (via PDZ domain). Found in a complex with PTPN13 and PDLIM4. Interacts with SVIL isoform 2. Interacts with LPAR2 but not other LPA receptors. Interacts with PRKAA2. Interacts with MAGI1. Interacts with SCRIB. In case of infection, interacts with S.typhimurium protein sseI. Post-translationally, phosphorylation at Tyr-55 by SRC is required for enhancement of lysophosphatidic acid-induced cell migration. Tyr-55 is dephosphorylated by PTPN13. Abundantly expressed in kidney, liver and lung. Lower levels in heart, placenta and pancreas. Expressed in colonic epithelial cells. Up-regulated in colonic tumors.

It localises to the cytoplasm. It is found in the cytoskeleton. The protein resides in the cell junction. Its subcellular location is the focal adhesion. The protein localises to the nucleus. Its function is as follows. Relays signals from the cell surface to the nucleus to weaken adherens junction and promote actin cytoskeleton reorganization and cell invasiveness. Involved in lysophosphatidic acid-induced cell adhesion and migration. Acts as a transcriptional coactivator for NF-kappa-B and JUN, and mediates the transrepression of these transcription factors induced by glucocorticoid receptor. The protein is Thyroid receptor-interacting protein 6 (TRIP6) of Homo sapiens (Human).